A 511-amino-acid polypeptide reads, in one-letter code: NADH-quinone oxidoreductase subunit N 1 (511 aa).

Transmembrane regions (helical) follow at residues 15–35 (LALPMLVLSGFAVAILLLDLV), 46–66 (ALALAGLAAATMSLAKVWQAV), 89–109 (FAIYFYLLFIVGAAVAILMSI), 120–140 (GEYHALILFATIGMMCMASGM), 142–162 (LILLFVGLELMALSTYVLVGF), 177–197 (LLLGAFSSGIFAYGLSLFYGL), 221–241 (PIALLALITTATGLLFKIAAV), 264–284 (VAVKAAGWAMLLRIFLFMLWP), 289–309 (YTPILIFVAVATMIGGNFAAL), 317–337 (LLAYSSISHVGYMLLGLVASD), 347–367 (GILVYLAVYTFMNLGAFAVIT), 393–413 (AVLLLVFLLSLAGIPPLAGFW), 426–446 (GHYTLAVVAVLFAVLGMYYYL), and 471–491 (AALWISALGTLGIGLFPEVFL).

Belongs to the complex I subunit 2 family. NDH-1 is composed of 14 different subunits. Subunits NuoA, H, J, K, L, M, N constitute the membrane sector of the complex.

The protein resides in the cell inner membrane. The catalysed reaction is a quinone + NADH + 5 H(+)(in) = a quinol + NAD(+) + 4 H(+)(out). In terms of biological role, NDH-1 shuttles electrons from NADH, via FMN and iron-sulfur (Fe-S) centers, to quinones in the respiratory chain. The immediate electron acceptor for the enzyme in this species is believed to be ubiquinone. Couples the redox reaction to proton translocation (for every two electrons transferred, four hydrogen ions are translocated across the cytoplasmic membrane), and thus conserves the redox energy in a proton gradient. The chain is NADH-quinone oxidoreductase subunit N 1 from Koribacter versatilis (strain Ellin345).